Reading from the N-terminus, the 164-residue chain is UPF0478 protein SSP1024 (164 aa).

A helical membrane pass occupies residues 7–27 (IAGIIAAVAFLILVIGIVVVL). Positions 136-164 (RNRRDSANYKTSSVANETNHSYTTRVDNK) are disordered. Residues 143–164 (NYKTSSVANETNHSYTTRVDNK) are compositionally biased toward polar residues.

Belongs to the UPF0478 family.

The protein localises to the cell membrane. The sequence is that of UPF0478 protein SSP1024 from Staphylococcus saprophyticus subsp. saprophyticus (strain ATCC 15305 / DSM 20229 / NCIMB 8711 / NCTC 7292 / S-41).